The chain runs to 399 residues: Acetylornithine aminotransferase (399 aa).

Residues 99–100 and phenylalanine 132 contribute to the pyridoxal 5'-phosphate site; that span reads GA. Arginine 135 contributes to the N(2)-acetyl-L-ornithine binding site. Pyridoxal 5'-phosphate is bound at residue 217 to 220; that stretch reads DEVQ. The residue at position 246 (lysine 246) is an N6-(pyridoxal phosphate)lysine. Threonine 274 provides a ligand contact to N(2)-acetyl-L-ornithine. Threonine 275 serves as a coordination point for pyridoxal 5'-phosphate.

It belongs to the class-III pyridoxal-phosphate-dependent aminotransferase family. ArgD subfamily. Homodimer. Pyridoxal 5'-phosphate serves as cofactor.

Its subcellular location is the cytoplasm. It catalyses the reaction N(2)-acetyl-L-ornithine + 2-oxoglutarate = N-acetyl-L-glutamate 5-semialdehyde + L-glutamate. The protein operates within amino-acid biosynthesis; L-arginine biosynthesis; N(2)-acetyl-L-ornithine from L-glutamate: step 4/4. The chain is Acetylornithine aminotransferase from Agrobacterium fabrum (strain C58 / ATCC 33970) (Agrobacterium tumefaciens (strain C58)).